The following is a 263-amino-acid chain: UPF0328 protein ECU08_2060 (263 aa).

The protein belongs to the UPF0328 family.

The chain is UPF0328 protein ECU08_2060 from Encephalitozoon cuniculi (strain GB-M1) (Microsporidian parasite).